The primary structure comprises 265 residues: 4-hydroxy-tetrahydrodipicolinate reductase (265 aa).

Residues 7–12 (GASGRM) and aspartate 33 contribute to the NAD(+) site. Arginine 34 provides a ligand contact to NADP(+). NAD(+) is bound by residues 96-98 (GTT) and 120-123 (AANM). Histidine 153 (proton donor/acceptor) is an active-site residue. (S)-2,3,4,5-tetrahydrodipicolinate is bound at residue histidine 154. The active-site Proton donor is the lysine 157. 163–164 (GT) provides a ligand contact to (S)-2,3,4,5-tetrahydrodipicolinate.

This sequence belongs to the DapB family.

The protein localises to the cytoplasm. It carries out the reaction (S)-2,3,4,5-tetrahydrodipicolinate + NAD(+) + H2O = (2S,4S)-4-hydroxy-2,3,4,5-tetrahydrodipicolinate + NADH + H(+). It catalyses the reaction (S)-2,3,4,5-tetrahydrodipicolinate + NADP(+) + H2O = (2S,4S)-4-hydroxy-2,3,4,5-tetrahydrodipicolinate + NADPH + H(+). The protein operates within amino-acid biosynthesis; L-lysine biosynthesis via DAP pathway; (S)-tetrahydrodipicolinate from L-aspartate: step 4/4. Its function is as follows. Catalyzes the conversion of 4-hydroxy-tetrahydrodipicolinate (HTPA) to tetrahydrodipicolinate. The polypeptide is 4-hydroxy-tetrahydrodipicolinate reductase (Burkholderia ambifaria (strain MC40-6)).